We begin with the raw amino-acid sequence, 348 residues long: Small ribosomal subunit biogenesis GTPase RsgA (348 aa).

The tract at residues 1 to 32 (MAKQKLTQNQKRRIHSNNAKALDRHRRQTKKQ) is disordered. The region spanning 106 to 274 (KNELSRPDYY…LIDSPGIREF (169 aa)) is the CP-type G domain. GTP-binding positions include 162-165 (NKID) and 216-224 (GQSGVGKSS). Positions 298, 303, 305, and 311 each coordinate Zn(2+).

Belongs to the TRAFAC class YlqF/YawG GTPase family. RsgA subfamily. Monomer. Associates with 30S ribosomal subunit, binds 16S rRNA. The cofactor is Zn(2+).

Its subcellular location is the cytoplasm. One of several proteins that assist in the late maturation steps of the functional core of the 30S ribosomal subunit. Helps release RbfA from mature subunits. May play a role in the assembly of ribosomal proteins into the subunit. Circularly permuted GTPase that catalyzes slow GTP hydrolysis, GTPase activity is stimulated by the 30S ribosomal subunit. In Actinobacillus succinogenes (strain ATCC 55618 / DSM 22257 / CCUG 43843 / 130Z), this protein is Small ribosomal subunit biogenesis GTPase RsgA.